Reading from the N-terminus, the 121-residue chain is Small ribosomal subunit protein uS13 (121 aa).

The disordered stretch occupies residues 91-121 (HRRGLPVRGQKTKNNARTRKGPVKTVANKKK).

The protein belongs to the universal ribosomal protein uS13 family. Part of the 30S ribosomal subunit. Forms a loose heterodimer with protein S19. Forms two bridges to the 50S subunit in the 70S ribosome.

In terms of biological role, located at the top of the head of the 30S subunit, it contacts several helices of the 16S rRNA. In the 70S ribosome it contacts the 23S rRNA (bridge B1a) and protein L5 of the 50S subunit (bridge B1b), connecting the 2 subunits; these bridges are implicated in subunit movement. Contacts the tRNAs in the A and P-sites. The protein is Small ribosomal subunit protein uS13 of Staphylococcus saprophyticus subsp. saprophyticus (strain ATCC 15305 / DSM 20229 / NCIMB 8711 / NCTC 7292 / S-41).